An 885-amino-acid chain; its full sequence is DNA mismatch repair protein MutS (885 aa).

640-647 (GPNMGGKS) contributes to the ATP binding site.

The protein belongs to the DNA mismatch repair MutS family.

Functionally, this protein is involved in the repair of mismatches in DNA. It is possible that it carries out the mismatch recognition step. This protein has a weak ATPase activity. The protein is DNA mismatch repair protein MutS of Variovorax paradoxus (strain S110).